A 154-amino-acid chain; its full sequence is Endoribonuclease YbeY (154 aa).

His113, His117, and His123 together coordinate Zn(2+).

It belongs to the endoribonuclease YbeY family. The cofactor is Zn(2+).

The protein resides in the cytoplasm. Single strand-specific metallo-endoribonuclease involved in late-stage 70S ribosome quality control and in maturation of the 3' terminus of the 16S rRNA. In Ehrlichia canis (strain Jake), this protein is Endoribonuclease YbeY.